Here is a 257-residue protein sequence, read N- to C-terminus: 14-3-3-like protein A (257 aa).

It belongs to the 14-3-3 family.

The sequence is that of 14-3-3-like protein A (GF14A) from Glycine max (Soybean).